We begin with the raw amino-acid sequence, 379 residues long: Junctional adhesion molecule-like (379 aa).

The signal sequence occupies residues 1–20 (MLCLLKLIVIPVILAPVGYP). Residues 21 to 281 (QGLPGLTVSS…QQGILNGNQL (261 aa)) lie on the Extracellular side of the membrane. Ig-like V-type domains are found at residues 24-135 (PGLT…KPVE) and 140-250 (PEEP…KTIV). Cysteines 45 and 119 form a disulfide. Asn79, Asn89, and Asn125 each carry an N-linked (GlcNAc...) asparagine glycan. An intrachain disulfide couples Cys158 to Cys236. The helical transmembrane segment at 282–302 (VIIVGIVCATFLLLPVLILIV) threads the bilayer. At 303 to 379 (KKAKWNKSSV…SLVRSSVRSK (77 aa)) the chain is on the cytoplasmic side. Tyr355 carries the post-translational modification Phosphotyrosine.

The protein belongs to the immunoglobulin superfamily. In terms of assembly, homodimer; active form in leukocyte-endothelial cell adhesion. Interacts (homodimeric form) with CXADR. Interacts (via cytoplasmic domain) with the PI3 kinase; upon CXADR-binding. Interacts with ITGA4 and ITGB1; integrin alpha-4/beta-1 may regulate leukocyte to endothelial cells adhesion by controlling JAML homodimerization. As to expression, expressed by gamma-delta intraepithelial T cells (at protein level).

Its subcellular location is the cell membrane. It is found in the cell junction. Transmembrane protein of the plasma membrane of leukocytes that control their migration and activation through interaction with CXADR, a plasma membrane receptor found on adjacent epithelial and endothelial cells. The interaction between both receptors mediates the activation of gamma-delta T-cells, a subpopulation of T-cells residing in epithelia and involved in tissue homeostasis and repair. Upon epithelial CXADR-binding, JAML induces downstream cell signaling events in gamma-delta T-cells through PI3-kinase and MAP kinases. It results in proliferation and production of cytokines and growth factors by T-cells that in turn stimulate epithelial tissues repair. It also controls the transmigration of leukocytes within epithelial and endothelial tissues through adhesive interactions with epithelial and endothelial CXADR. The polypeptide is Junctional adhesion molecule-like (Mus musculus (Mouse)).